The primary structure comprises 96 residues: Acetolactate synthase isozyme 1 small subunit (96 aa).

In terms of domain architecture, ACT spans 10–83 (ILELTVRNHP…DVVKVQRNQS (74 aa)).

The protein belongs to the acetolactate synthase small subunit family. In terms of assembly, dimer of large and small chains.

It carries out the reaction 2 pyruvate + H(+) = (2S)-2-acetolactate + CO2. The protein operates within amino-acid biosynthesis; L-isoleucine biosynthesis; L-isoleucine from 2-oxobutanoate: step 1/4. It participates in amino-acid biosynthesis; L-valine biosynthesis; L-valine from pyruvate: step 1/4. The sequence is that of Acetolactate synthase isozyme 1 small subunit (ilvN) from Escherichia coli O157:H7.